A 1277-amino-acid polypeptide reads, in one-letter code: Membrane-associated guanylate kinase, WW and PDZ domain-containing protein 2 (1277 aa).

Residues 17 to 101 (ESVIGRNPEG…PLRLKCVKQG (85 aa)) form the PDZ domain. The region spanning 109-283 (RHYLNLRFQK…APVYSQPEEL (175 aa)) is the Guanylate kinase-like domain. The disordered stretch occupies residues 205 to 308 (PGATPSAEGK…EDSDPLPDNW (104 aa)). Over residues 281–296 (EELKDQMDDTKSTKPE) the composition is skewed to basic and acidic residues. 2 WW domains span residues 302–335 (DPLP…DPRL) and 348–381 (NELP…NPVL). The tract at residues 302–381 (DPLPDNWEMA…RRTQFENPVL (80 aa)) is interaction with DDN. Phosphotyrosine is present on Tyr362. Residues 426 to 510 (STTLKKSNMG…SVNLVLCRGY (85 aa)) enclose the PDZ 1 domain. The disordered stretch occupies residues 556–575 (QSVPDITDRPPHSLHSMPAD). One can recognise a PDZ 2 domain in the interval 605-683 (TLTIVKGAKG…ETSLIIHRGG (79 aa)). Ser686 is modified (phosphoserine). Positions 778–860 (DVHLRRMESG…NGQVNLTVRR (83 aa)) constitute a PDZ 3 domain. Tyr827 is modified (phosphotyrosine). Residues 869 to 913 (CPENGRSPGSVSTHHSSPRSDYATYANSNHAAPSNNASPPEGFAS) form a disordered region. A phosphoserine mark is found at Ser884 and Ser885. The segment covering 894 to 908 (ANSNHAAPSNNASPP) has biased composition (low complexity). In terms of domain architecture, PDZ 4 spans 920–1010 (DVIIHRKENE…SVTLRIIPQE (91 aa)). The span at 1011 to 1042 (ELNNPTSAPSSEKQSPMAQQHSPLAQQHSPLA) shows a compositional bias: polar residues. The tract at residues 1011–1130 (ELNNPTSAPS…PDTRQYPLSD (120 aa)) is disordered. The segment covering 1069-1085 (NSYRSEVKARQDVKPDI) has biased composition (basic and acidic residues). One can recognise a PDZ 5 domain in the interval 1141–1223 (TVDMEKGAKG…RVRLLLKRGT (83 aa)).

Belongs to the MAGUK family. In terms of assembly, interacts (via its WW domains) with DRPLA. Interacts with CTNNB1, ACVR2A, SMAD2 and SMAD3. Part of a complex consisting of MAGI2/ARIP1, ACVR2A, ACVR1B and SMAD3. May interact with HTR2A and IGSF9. Interacts with HTR4. Interacts (via guanylate kinase domain) with DLGAP1. Interacts (via PDZ domains) with GRIN2A, GRID2 and NLGN1. Interacts with CTNND2. Interacts with MAGUIN-1. Interacts (via its second PDZ domain) with PTEN (via unphosphorylated C-terminus); this interaction diminishes the degradation rate of PTEN. Found in a complex, at least composed of KIDINS220, MAGI2, NTRK1 and RAPGEF2; the complex is mainly formed at late endosomes in a NGF-dependent manner. Interacts with RAPGEF2; the interaction occurs before or after nerve growth factor (NGF) stimulation. Isoform 1 interacts (via PDZ domain) with KIDINS220 isoform 2 (via C-terminal domain). Interacts with DDN. Identified in a complex with ACTN4, CASK, IQGAP1, NPHS1, SPTAN1 and SPTBN1. Interacts with DLL1. Found in a complex with IGSF9B and NLGN2; the interaction with IGSF9B is mediated via the PDZ 5 and PDZ 6 domains, while the interaction with NLGN2 is mediated via the WW1, WW2 and PDZ2 domains. Interacts (via PDZ 6 domain) with USH1G (via SAM domain); the interaction is triggered by phosphorylation of USH1G by CK2 and negatively regulates MAGI2-mediated endocytosis. As to expression, expressed in the foot process layer of podocytes of the kidney glomeruli but not in tubules (at protein level). Expressed in the brain.

It localises to the cytoplasm. The protein localises to the late endosome. Its subcellular location is the synapse. The protein resides in the synaptosome. It is found in the cell membrane. It localises to the cytoskeleton. The protein localises to the microtubule organizing center. Its subcellular location is the centrosome. The protein resides in the cell projection. It is found in the cilium. It localises to the centriole. The protein localises to the photoreceptor inner segment. Its subcellular location is the photoreceptor outer segment. Functionally, seems to act as scaffold molecule at synaptic junctions by assembling neurotransmitter receptors and cell adhesion proteins. Plays a role in nerve growth factor (NGF)-induced recruitment of RAPGEF2 to late endosomes and neurite outgrowth. May play a role in regulating activin-mediated signaling in neuronal cells. Enhances the ability of PTEN to suppress AKT1 activation. Plays a role in receptor-mediated clathrin-dependent endocytosis which is required for ciliogenesis. The protein is Membrane-associated guanylate kinase, WW and PDZ domain-containing protein 2 (Magi2) of Rattus norvegicus (Rat).